Reading from the N-terminus, the 350-residue chain is UDP-3-O-acylglucosamine N-acyltransferase (350 aa).

Histidine 257 (proton acceptor) is an active-site residue.

The protein belongs to the transferase hexapeptide repeat family. LpxD subfamily. In terms of assembly, homotrimer.

The enzyme catalyses a UDP-3-O-[(3R)-3-hydroxyacyl]-alpha-D-glucosamine + a (3R)-hydroxyacyl-[ACP] = a UDP-2-N,3-O-bis[(3R)-3-hydroxyacyl]-alpha-D-glucosamine + holo-[ACP] + H(+). Its pathway is bacterial outer membrane biogenesis; LPS lipid A biosynthesis. Functionally, catalyzes the N-acylation of UDP-3-O-acylglucosamine using 3-hydroxyacyl-ACP as the acyl donor. Is involved in the biosynthesis of lipid A, a phosphorylated glycolipid that anchors the lipopolysaccharide to the outer membrane of the cell. The sequence is that of UDP-3-O-acylglucosamine N-acyltransferase from Chelativorans sp. (strain BNC1).